Here is an 835-residue protein sequence, read N- to C-terminus: Ribosome-releasing factor 2, mitochondrial (835 aa).

A mitochondrion-targeting transit peptide spans Met1–Tyr50. Residues Thr57 to Ala343 enclose the tr-type G domain. GTP-binding positions include Ala66–Thr73, Asp131–His135, and Asn183–Asp186.

Belongs to the TRAFAC class translation factor GTPase superfamily. Classic translation factor GTPase family. EF-G/EF-2 subfamily.

It localises to the mitochondrion. Functionally, mitochondrial GTPase that mediates the disassembly of ribosomes from messenger RNA at the termination of mitochondrial protein biosynthesis. Not involved in the GTP-dependent ribosomal translocation step during translation elongation. The chain is Ribosome-releasing factor 2, mitochondrial from Eremothecium gossypii (strain ATCC 10895 / CBS 109.51 / FGSC 9923 / NRRL Y-1056) (Yeast).